A 258-amino-acid polypeptide reads, in one-letter code: Acyl-[acyl-carrier-protein]--UDP-N-acetylglucosamine O-acyltransferase (258 aa).

Belongs to the transferase hexapeptide repeat family. LpxA subfamily. As to quaternary structure, homotrimer.

The protein resides in the cytoplasm. The catalysed reaction is a (3R)-hydroxyacyl-[ACP] + UDP-N-acetyl-alpha-D-glucosamine = a UDP-3-O-[(3R)-3-hydroxyacyl]-N-acetyl-alpha-D-glucosamine + holo-[ACP]. It functions in the pathway glycolipid biosynthesis; lipid IV(A) biosynthesis; lipid IV(A) from (3R)-3-hydroxytetradecanoyl-[acyl-carrier-protein] and UDP-N-acetyl-alpha-D-glucosamine: step 1/6. In terms of biological role, involved in the biosynthesis of lipid A, a phosphorylated glycolipid that anchors the lipopolysaccharide to the outer membrane of the cell. The sequence is that of Acyl-[acyl-carrier-protein]--UDP-N-acetylglucosamine O-acyltransferase from Pseudomonas aeruginosa (strain LESB58).